Here is a 205-residue protein sequence, read N- to C-terminus: Methylthioribulose-1-phosphate dehydratase (205 aa).

Zn(2+) contacts are provided by His96 and His98.

Belongs to the aldolase class II family. MtnB subfamily. Zn(2+) serves as cofactor.

It carries out the reaction 5-(methylsulfanyl)-D-ribulose 1-phosphate = 5-methylsulfanyl-2,3-dioxopentyl phosphate + H2O. Its pathway is amino-acid biosynthesis; L-methionine biosynthesis via salvage pathway; L-methionine from S-methyl-5-thio-alpha-D-ribose 1-phosphate: step 2/6. Functionally, catalyzes the dehydration of methylthioribulose-1-phosphate (MTRu-1-P) into 2,3-diketo-5-methylthiopentyl-1-phosphate (DK-MTP-1-P). This chain is Methylthioribulose-1-phosphate dehydratase, found in Pseudomonas aeruginosa (strain UCBPP-PA14).